The following is a 285-amino-acid chain: Dihydropteroate synthase (285 aa).

In terms of domain architecture, Pterin-binding spans 25–271; sequence TLVMGILNVT…DVKQIARMAK (247 aa). Residue Asn-32 participates in Mg(2+) binding. (7,8-dihydropterin-6-yl)methyl diphosphate-binding positions include Thr-72, Asp-106, Asn-125, Asp-189, Lys-225, and 259–261; that span reads RVH.

It belongs to the DHPS family. The cofactor is Mg(2+).

It carries out the reaction (7,8-dihydropterin-6-yl)methyl diphosphate + 4-aminobenzoate = 7,8-dihydropteroate + diphosphate. Its pathway is cofactor biosynthesis; tetrahydrofolate biosynthesis; 7,8-dihydrofolate from 2-amino-4-hydroxy-6-hydroxymethyl-7,8-dihydropteridine diphosphate and 4-aminobenzoate: step 1/2. In terms of biological role, catalyzes the condensation of para-aminobenzoate (pABA) with 6-hydroxymethyl-7,8-dihydropterin diphosphate (DHPt-PP) to form 7,8-dihydropteroate (H2Pte), the immediate precursor of folate derivatives. The protein is Dihydropteroate synthase (sul) of Bacillus subtilis (strain 168).